We begin with the raw amino-acid sequence, 1107 residues long: Unconventional myosin-Ie (1107 aa).

Residues 19 to 692 form the Myosin motor domain; that stretch reads SGVDDMVLLS…SLFLLEEMRE (674 aa). 112 to 119 serves as a coordination point for ATP; it reads GESGAGKT. An actin-binding region spans residues 581–591; sequence PHYIRCIKPNE. One can recognise an IQ domain in the interval 695 to 724; that stretch reads YDGYARVIQKTWRKFVARKKYVQMREDASD. The TH1 domain occupies 730–922; that stretch reads KERRRNSINR…NKVLQVSIGP (193 aa). A disordered region spans residues 920–1052; sequence IGPGLPKNAR…KPQPKPKPQV (133 aa). 3 stretches are compositionally biased toward polar residues: residues 933 to 949, 977 to 989, and 998 to 1012; these read RNTVSSRGYSGGTNNNY, SGNQRSNQKSLYT, and RQQSTGSDRLSQTPE. At serine 1001 the chain carries Phosphoserine. A compositionally biased stretch (pro residues) spans 1034–1051; sequence RPPPAGGRPKPQPKPKPQ. Positions 1050–1107 constitute an SH3 domain; the sequence is PQVPQCKALYAYDAQDTDELSFNANDVIDIIKEDPSGWWTGRLRGKQGLFPNNYVTKI.

Belongs to the TRAFAC class myosin-kinesin ATPase superfamily. Myosin family. In terms of assembly, interacts with CALM and F-actin. Interacts (via SH3 domain) with SYNJ1, DNM1 and DNM2. Interacts with ARL14EP. Interacts with CARMIL1. Detected in brain stem, brain cortex, cerebellum, stomach, colon, heart, lung, liver, spleen and kidney. Detected in utricle, cochlea, outer hair cell bundle cuticular plate and vestibular epithelia (at protein level). Detected in cochlea and vestibular tissues. Detected in kidney, lung, spleen and intestine.

It localises to the cytoplasm. It is found in the cytoskeleton. Its subcellular location is the cytoplasmic vesicle. The protein resides in the clathrin-coated vesicle. The protein localises to the cell junction. Myosins are actin-based motor molecules with ATPase activity. Unconventional myosins serve in intracellular movements. Their highly divergent tails bind to membranous compartments, which are then moved relative to actin filaments. Binds to membranes containing anionic phospholipids via its tail domain. Involved in clathrin-mediated endocytosis and intracellular movement of clathrin-coated vesicles. Required for normal morphology of the glomerular basement membrane, normal development of foot processes by kidney podocytes and normal kidney function. In dendritic cells, may control the movement of class II-containing cytoplasmic vesicles along the actin cytoskeleton by connecting them with the actin network via ARL14EP and ARL14. This Rattus norvegicus (Rat) protein is Unconventional myosin-Ie (Myo1e).